A 96-amino-acid chain; its full sequence is Small ribosomal subunit protein bS18 (96 aa).

This sequence belongs to the bacterial ribosomal protein bS18 family. As to quaternary structure, part of the 30S ribosomal subunit. Forms a tight heterodimer with protein bS6.

In terms of biological role, binds as a heterodimer with protein bS6 to the central domain of the 16S rRNA, where it helps stabilize the platform of the 30S subunit. The polypeptide is Small ribosomal subunit protein bS18 (Borreliella burgdorferi (strain ATCC 35210 / DSM 4680 / CIP 102532 / B31) (Borrelia burgdorferi)).